A 66-amino-acid polypeptide reads, in one-letter code: Beta-defensin 107A (66 aa).

A signal peptide spans 1–22 (MKIFFFIFAALFLLAQIFQART). 2 cysteine pairs are disulfide-bonded: Cys-37–Cys-51 and Cys-41–Cys-60.

It belongs to the beta-defensin family.

It is found in the secreted. Has antibacterial activity. The protein is Beta-defensin 107A (DEFB107A) of Gorilla gorilla gorilla (Western lowland gorilla).